Consider the following 66-residue polypeptide: Cold shock protein CspD (66 aa).

Positions 4–63 constitute a CSD domain; sequence GKVKWFNNEKGFGFIEVEGGDDVFVHFTAIEGDGYKSLEEGQEVSFEIVEGNRGPQASNV.

It localises to the cytoplasm. This chain is Cold shock protein CspD (cspD), found in Bacillus subtilis (strain 168).